The primary structure comprises 409 residues: uncharacterized protein (409 aa).

A run of 10 helical transmembrane segments spans residues 18-38, 47-67, 100-120, 159-179, 180-200, 232-252, 260-280, 302-322, 355-375, and 380-400; these read ALSA…ADVV, GPLL…TGVG, VVTV…ALVI, VGAM…GNAY, APAL…LLWL, FWLY…FGLL, GVLA…ADAL, ILSI…VVIG, GVFA…IGWL, and IGTL…MMFA.

It is found in the cell membrane. This is an uncharacterized protein from Mycobacterium tuberculosis (strain CDC 1551 / Oshkosh).